We begin with the raw amino-acid sequence, 338 residues long: Aspartate carbamoyltransferase catalytic subunit (338 aa).

Carbamoyl phosphate-binding residues include Arg59 and Thr60. Residue Lys87 coordinates L-aspartate. Residues Arg109, His142, and Gln145 each coordinate carbamoyl phosphate. L-aspartate contacts are provided by Arg182 and Arg253. Carbamoyl phosphate contacts are provided by Gly294 and Pro295.

The protein belongs to the aspartate/ornithine carbamoyltransferase superfamily. ATCase family. Heterododecamer (2C3:3R2) of six catalytic PyrB chains organized as two trimers (C3), and six regulatory PyrI chains organized as three dimers (R2).

It carries out the reaction carbamoyl phosphate + L-aspartate = N-carbamoyl-L-aspartate + phosphate + H(+). Its pathway is pyrimidine metabolism; UMP biosynthesis via de novo pathway; (S)-dihydroorotate from bicarbonate: step 2/3. Functionally, catalyzes the condensation of carbamoyl phosphate and aspartate to form carbamoyl aspartate and inorganic phosphate, the committed step in the de novo pyrimidine nucleotide biosynthesis pathway. This chain is Aspartate carbamoyltransferase catalytic subunit, found in Prochlorococcus marinus (strain AS9601).